Reading from the N-terminus, the 356-residue chain is 3-dehydroquinate synthase (356 aa).

NAD(+) is bound by residues 106–110, 130–131, Lys143, and Lys152; these read GVVGD and TT. Residues Glu185, His248, and His265 each contribute to the Zn(2+) site.

Belongs to the sugar phosphate cyclases superfamily. Dehydroquinate synthase family. Requires Co(2+) as cofactor. The cofactor is Zn(2+). NAD(+) is required as a cofactor.

It is found in the cytoplasm. It catalyses the reaction 7-phospho-2-dehydro-3-deoxy-D-arabino-heptonate = 3-dehydroquinate + phosphate. Its pathway is metabolic intermediate biosynthesis; chorismate biosynthesis; chorismate from D-erythrose 4-phosphate and phosphoenolpyruvate: step 2/7. Catalyzes the conversion of 3-deoxy-D-arabino-heptulosonate 7-phosphate (DAHP) to dehydroquinate (DHQ). The protein is 3-dehydroquinate synthase of Thermoanaerobacter pseudethanolicus (strain ATCC 33223 / 39E) (Clostridium thermohydrosulfuricum).